A 184-amino-acid polypeptide reads, in one-letter code: Rubrerythrin-2 (184 aa).

Residues 2–146 (SVKNAMTADF…DAQDSAKENK (145 aa)) enclose the Ferritin-like diiron domain. Glu19, Glu52, Glu94, Glu97, Glu128, His131, Cys156, Cys159, Cys171, and Cys174 together coordinate Fe(3+). The Rubredoxin-like domain maps to 151 to 184 (GKVYICPVCGFTTLDENIEQCPICGVKKDKFQAF).

Fe(3+) is required as a cofactor.

The catalysed reaction is H2O2 + NADH + H(+) = NAD(+) + 2 H2O. Rubredoxin (Rd) increases the NADH consumption rate by serving as an intermediary electron-transfer shuttle between NROR and Rbr2. Its function is as follows. Functions as the terminal component of an NADH peroxidase (NADH:H(2)O(2) oxidoreductase) when using NADH:rubredoxin oxidoreductase (NROR) as the electron transport intermediary from NADH to Rbr2. The sequence is that of Rubrerythrin-2 (rbr2) from Clostridium acetobutylicum (strain ATCC 824 / DSM 792 / JCM 1419 / IAM 19013 / LMG 5710 / NBRC 13948 / NRRL B-527 / VKM B-1787 / 2291 / W).